The primary structure comprises 521 residues: MSKTFEYVICGGGTVGCVLASRLSLAGHSVLLIEAGPEDYNDRIMSPVAAPHLHGTEWEHNLMTTKQPGLGNRSVPNYAGKLLSGSSGINYGLWTRGHSVDYDSWAKAVGDERWNYANMLKYFQKTETQISTTAAARIYPLREPIRNAMVAAGLDYNPDPNGGNPLGFGPFTENWKNALRQPASKAYDLSKATVLTNSVIARVDFDDPKTTATGVTLTDGTQYTATSEVLVTCGALKTPQLLMLSGIGPQQHLAQHNIPIIADLPVGENYHDKISATFFWKLRHPEKGYALGSPRFNKPEFRHGNPIEWVATVPTPHAELIKATQQDQIDSDDPYLQKPRGNVEVMVAYAPIAGGGSEFRLPMDGTHISSPVVLLLPTSRGRITLASADPTADPVLDPGYLDTETDRAAIRAGMRVALRLMETESAKEVIDGETPPPGHEPLTSACSDADLDRRVQIVGSSFFQNGGTAAMGTVVDTQCRVKGVRNLRVCDASVLSVPLAGHYQAPMYALGEAVADMLLAQ.

FAD contacts are provided by residues 14–15 (TV), 34–35 (EA), L82, 90–93 (NYGL), A492, and 503–504 (YQ).

This sequence belongs to the GMC oxidoreductase family. Requires FAD as cofactor.

It functions in the pathway secondary metabolite biosynthesis. In terms of biological role, GMC-type oxidoreductase; part of the gene cluster that mediates the biosynthesis of aculins. The pathway begins with the synthesis of 6-methylsalicylic acid by the polyketide synthase (PKS) acuA via condensation of acetate and malonate units. The 6-methylsalicylic acid decarboxylase acuB then catalyzes the decarboxylation of 6-methylsalicylic acid to yield m-cresol (also known as 3-methylphenol). These first reactions occur in the cytosol. The intermediate m-cresol is then transported into the endoplasmic reticulum where the cytochrome P450 monooxygenase acuC converts it to m-hydroxybenzyl alcohol, which is further converted to gentisyl alcohol by the cytochrome P450 monooxygenase acuD. Gentisyl alcohol is further oxidized by the oxidoreductase acuE that probably catalyzes hydroxylation of the aromatic ring. The aromatic system might then be opened by oxidation through a Baeyer-Villiger type of oxidation, which could be catalyzed by acuF, with the carboxylic acid at C-1 subsequently reduced to an aldehyde by acuG. Subsequently, a hemiacetal is formed, before the dehydrogenase acuH would reduce the double bond between C-4 and C-6. Finally, keto-enol tautomerism results in formation of aculinic acid, which exists as two diastereomers (both R/S configurations at C-1) by non-enzymatic hemiacetal formation. The carboxypeptidase acuI could be involved in the linking of aculinic acid to an aculene A moiety produced by the aculene biosynthesis cluster and which leads to the production of aculin A. AcuI may also be involved in the attachment of proline to aculinic acid to form epi-aculins A and B. This Aspergillus aculeatus (strain ATCC 16872 / CBS 172.66 / WB 5094) protein is GMC-type oxidoreductase acuG.